Reading from the N-terminus, the 295-residue chain is Calcium-regulated actin-bundling protein (295 aa).

In terms of assembly, monomer.

In terms of biological role, may contribute to the structure and reorganization of filopodia and pseudopodia accompanying cell movements. This is Calcium-regulated actin-bundling protein (abpB) from Dictyostelium discoideum (Social amoeba).